A 426-amino-acid polypeptide reads, in one-letter code: Gamma-glutamyl phosphate reductase (426 aa).

This sequence belongs to the gamma-glutamyl phosphate reductase family.

The protein localises to the cytoplasm. It carries out the reaction L-glutamate 5-semialdehyde + phosphate + NADP(+) = L-glutamyl 5-phosphate + NADPH + H(+). It functions in the pathway amino-acid biosynthesis; L-proline biosynthesis; L-glutamate 5-semialdehyde from L-glutamate: step 2/2. Functionally, catalyzes the NADPH-dependent reduction of L-glutamate 5-phosphate into L-glutamate 5-semialdehyde and phosphate. The product spontaneously undergoes cyclization to form 1-pyrroline-5-carboxylate. The sequence is that of Gamma-glutamyl phosphate reductase from Ralstonia nicotianae (strain ATCC BAA-1114 / GMI1000) (Ralstonia solanacearum).